Reading from the N-terminus, the 510-residue chain is Glycerol kinase (510 aa).

ADP is bound at residue T12. 3 residues coordinate ATP: T12, T13, and S14. Position 12 (T12) interacts with sn-glycerol 3-phosphate. R16 is a binding site for ADP. Sn-glycerol 3-phosphate is bound by residues R82, E83, and Y134. Positions 82, 83, and 134 each coordinate glycerol. H230 carries the post-translational modification Phosphohistidine; by HPr. D244 serves as a coordination point for sn-glycerol 3-phosphate. Residues D244 and Q245 each contribute to the glycerol site. Residues T266 and G309 each contribute to the ADP site. ATP is bound by residues T266, G309, Q313, and G410. 2 residues coordinate ADP: G410 and N414.

Belongs to the FGGY kinase family. Homotetramer and homodimer (in equilibrium). In terms of processing, the phosphoenolpyruvate-dependent sugar phosphotransferase system (PTS), including enzyme I, and histidine-containing protein (HPr) are required for the phosphorylation, which leads to the activation of the enzyme.

It carries out the reaction glycerol + ATP = sn-glycerol 3-phosphate + ADP + H(+). Its pathway is polyol metabolism; glycerol degradation via glycerol kinase pathway; sn-glycerol 3-phosphate from glycerol: step 1/1. Its activity is regulated as follows. Activated by phosphorylation and inhibited by fructose 1,6-bisphosphate (FBP). Key enzyme in the regulation of glycerol uptake and metabolism. Catalyzes the phosphorylation of glycerol to yield sn-glycerol 3-phosphate. In Bacillus cereus (strain ATCC 10987 / NRS 248), this protein is Glycerol kinase.